The sequence spans 349 residues: Heat-inducible transcription repressor HrcA (349 aa).

This sequence belongs to the HrcA family.

In terms of biological role, negative regulator of class I heat shock genes (grpE-dnaK-dnaJ and groELS operons). Prevents heat-shock induction of these operons. The protein is Heat-inducible transcription repressor HrcA of Xylella fastidiosa (strain M23).